Consider the following 176-residue polypeptide: Cytochrome b (176 aa).

3 helical membrane passes run 33–53 (FGSL…FLAM), 77–98 (WVLR…YLHV), and 113–133 (WNMG…GYVL). Heme b-binding residues include H83 and H97.

It belongs to the cytochrome b family. In terms of assembly, the cytochrome bc1 complex contains 11 subunits: 3 respiratory subunits (MT-CYB, CYC1 and UQCRFS1), 2 core proteins (UQCRC1 and UQCRC2) and 6 low-molecular weight proteins (UQCRH/QCR6, UQCRB/QCR7, UQCRQ/QCR8, UQCR10/QCR9, UQCR11/QCR10 and a cleavage product of UQCRFS1). This cytochrome bc1 complex then forms a dimer. Requires heme b as cofactor.

The protein localises to the mitochondrion inner membrane. Functionally, component of the ubiquinol-cytochrome c reductase complex (complex III or cytochrome b-c1 complex) that is part of the mitochondrial respiratory chain. The b-c1 complex mediates electron transfer from ubiquinol to cytochrome c. Contributes to the generation of a proton gradient across the mitochondrial membrane that is then used for ATP synthesis. The sequence is that of Cytochrome b (MT-CYB) from Lasionycteris noctivagans (Silver-haired bat).